Reading from the N-terminus, the 143-residue chain is Large ribosomal subunit protein uL15 (143 aa).

The tract at residues 20-52 (GRGIGSGKGKTAGRGHKGQHSRAGGYHKVGFEG) is disordered. Positions 30 to 39 (TAGRGHKGQH) are enriched in basic residues.

This sequence belongs to the universal ribosomal protein uL15 family. In terms of assembly, part of the 50S ribosomal subunit.

In terms of biological role, binds to the 23S rRNA. This Coxiella burnetii (strain CbuG_Q212) (Coxiella burnetii (strain Q212)) protein is Large ribosomal subunit protein uL15.